The chain runs to 60 residues: Small ribosomal subunit protein bS21 (60 aa).

The segment at 36–60 is disordered; it reads QFFETPQEKHKRKEATRRRQRSRRR. The span at 44–60 shows a compositional bias: basic residues; that stretch reads KHKRKEATRRRQRSRRR.

It belongs to the bacterial ribosomal protein bS21 family.

This Synechocystis sp. (strain ATCC 27184 / PCC 6803 / Kazusa) protein is Small ribosomal subunit protein bS21 (rpsU).